The primary structure comprises 427 residues: Glutamyl-tRNA reductase (427 aa).

Residues 49–52, Ser109, 114–116, and Gln120 each bind substrate; these read TCNR and EGQ. The active-site Nucleophile is the Cys50. 188–193 contacts NADP(+); sequence GAGKMA.

Belongs to the glutamyl-tRNA reductase family. In terms of assembly, homodimer.

It carries out the reaction (S)-4-amino-5-oxopentanoate + tRNA(Glu) + NADP(+) = L-glutamyl-tRNA(Glu) + NADPH + H(+). It functions in the pathway porphyrin-containing compound metabolism; protoporphyrin-IX biosynthesis; 5-aminolevulinate from L-glutamyl-tRNA(Glu): step 1/2. Its pathway is porphyrin-containing compound metabolism; chlorophyll biosynthesis. With respect to regulation, feedback inhibition by heme. In terms of biological role, catalyzes the NADPH-dependent reduction of glutamyl-tRNA(Glu) to glutamate 1-semialdehyde (GSA). This Synechocystis sp. (strain ATCC 27184 / PCC 6803 / Kazusa) protein is Glutamyl-tRNA reductase.